A 289-amino-acid chain; its full sequence is Protein SET (289 aa).

A disordered region spans residues 1 to 42 (MAPKRQSAILPQPKKPRPVAAPKLEDKSASPGLPKGEKEQQE). Alanine 2 carries the n,N,N-trimethylalanine modification. Serine 7 bears the Phosphoserine mark. Proline 11 carries the post-translational modification N6-acetyllysine. Lysine 15 bears the Phosphoserine mark. N6-acetyllysine is present on lysine 23. Residues leucine 24, serine 28, and serine 62 each carry the phosphoserine modification. The tract at residues 31-77 (PGLPKGEKEQQEAIEHIDEVQNEIDRLNEQASEEILKVEQKYNKLRQ) is dimerization. At lysine 67 the chain carries N6-acetyllysine. Residues 78 to 224 (PFFQKRSELI…ELGEVIKDDI (147 aa)) form an earmuff domain region. Residue tyrosine 145 is modified to Phosphotyrosine. Lysine 149 carries the post-translational modification N6-acetyllysine. Lysine 153 is covalently cross-linked (Glycyl lysine isopeptide (Lys-Gly) (interchain with G-Cter in ubiquitin)). Disordered stretches follow at residues 157-206 (LNES…TWFT) and 235-289 (PDMD…GEDD). The span at 168–180 (TEIKWKSGKDLTK) shows a compositional bias: basic and acidic residues. Residue lysine 171 is modified to N6-acetyllysine. A compositionally biased stretch (acidic residues) spans 236-289 (DMDDEEGEAEDDDDDDEEEEGLEDIDEEGDEDEGEEDDDEDEGEEGEEDEGEDD).

The protein belongs to the nucleosome assembly protein (NAP) family. In terms of assembly, headphone-shaped homodimer. Isoform 1 and isoform 2 interact directly with each other and with ANP32A within the tripartite INHAT (inhibitor of acetyltransferases) complex. Isoform 1 and isoform 2 interact also with histones. Isoform 2 is a omponent of the SET complex, composed of at least ANP32A, APEX1, HMGB2, NME1, SET and TREX1, but not NME2 or TREX2. Within this complex, directly interacts with ANP32A, NME1, HMGB2 and TREX1; the interaction with ANP32A is enhanced after cleavage. Interacts with APBB1, CHTOP, SETBP1, SGO1. Isoform 2 is phosphorylated on Ser-15 and Ser-24. Post-translationally, isoform 2 is acetylated on Lys-11. In terms of processing, some glutamate residues are glycylated by TTLL8. This modification occurs exclusively on glutamate residues and results in a glycine chain on the gamma-carboxyl group. N-terminus of isoform 1 is methylated by METTL11A/NTM1. Mainly trimethylated. Post-translationally, cleaved after Lys-176 by GZMA. The cleavage inhibits its nucleosome assembly activity and disrupts the inhibition on NME1. Widely expressed, with higher expression in brain, thymus, spleen and bone marrow, and lower expression in heart, liver and muscle.

It is found in the cytoplasm. Its subcellular location is the cytosol. The protein localises to the endoplasmic reticulum. It localises to the nucleus. The protein resides in the nucleoplasm. In terms of biological role, multitasking protein, involved in apoptosis, transcription, nucleosome assembly and histone chaperoning. Isoform 2 anti-apoptotic activity is mediated by inhibition of the GZMA-activated DNase, NME1. In the course of cytotoxic T-lymphocyte (CTL)-induced apoptosis, GZMA cleaves SET, disrupting its binding to NME1 and releasing NME1 inhibition. Isoform 1 and isoform 2 are potent inhibitors of protein phosphatase 2A. Isoform 1 and isoform 2 inhibit EP300/CREBBP and PCAF-mediated acetylation of histones (HAT) and nucleosomes, most probably by masking the accessibility of lysines of histones to the acetylases. The predominant target for inhibition is histone H4. HAT inhibition leads to silencing of HAT-dependent transcription and prevents active demethylation of DNA. Both isoforms stimulate DNA replication of the adenovirus genome complexed with viral core proteins; however, isoform 2 specific activity is higher. The sequence is that of Protein SET (Set) from Rattus norvegicus (Rat).